The primary structure comprises 487 residues: WAS/WASL-interacting protein family member 1 (487 aa).

Residues 1 to 14 (MPVPPPPAPPPPPT) show a composition bias toward pro residues. Residues 1-487 (MPVPPPPAPP…GAPPLPPIPR (487 aa)) are disordered. The span at 21–31 (EKPSLNKTEQA) shows a compositional bias: polar residues. A WH2 domain is found at 32–49 (GRNALLSDISKGKKLKKT). Arg33 is subject to Asymmetric dimethylarginine. Residues 45–48 (KLKK) form a binds actin region. Residues 64–100 (GAGGGYGGGSGGGGGGGSSGGGGNFGGGGPPGLGGLF) are compositionally biased toward gly residues. Arg121 and Arg130 each carry omega-N-methylarginine. The span at 136–147 (PFSSPSGPGRFP) shows a compositional bias: low complexity. Ser138 is subject to Phosphoserine. Composition is skewed to pro residues over residues 157-170 (PPEP…PPRP) and 178-190 (SLPP…PRPI). The residue at position 222 (Ser222) is a Phosphoserine. Pro residues-rich tracts occupy residues 234-243 (FPRPPLPPTP), 269-285 (VPPP…PSTP), and 293-309 (APPP…PLPP). Ser324 bears the Phosphoserine mark. Residues 328 to 355 (PTPPLPSPGRSGPLPPPPTERPPPPVRD) show a composition bias toward pro residues. Thr329 is modified (phosphothreonine). Ser334 is subject to Phosphoserine. XRSGPXPPXP motif repeat units lie at residues 336–345 (GRSGPLPPPP), 358–367 (GRSGPLPPPP), and 394–403 (PRSGPRPPLP). A compositionally biased stretch (pro residues) spans 397–418 (GPRPPLPPDRPGAGAPPPPPPS). Residues 419-428 (TSVRNGFQDS) show a composition bias toward polar residues. Residues 464-478 (ARSESRSGSNRRERG) are compositionally biased toward basic and acidic residues.

Belongs to the verprolin family. In terms of assembly, binds to WAS within the N-terminal region, at a site distinct from the CDC42-binding site. Binds profilin and actin. Interacts with DBNL. Binds to WASL. Interacts with DBNL. Interacts with FNBP1L (via the SH3 domain). In terms of tissue distribution, isoforms were differentially expressed. One isoform was ubiquitously expressed, another was muscle-specific and another was expressed in the liver, heart and testis.

It localises to the cytoplasmic vesicle. Its subcellular location is the cytoplasm. The protein localises to the cytoskeleton. It is found in the cell projection. The protein resides in the ruffle. In terms of biological role, plays a role in the reorganization of the actin cytoskeleton. Contributes with NCK1 and GRB2 in the recruitment and activation of WASL. Plays a role in the formation of cell ruffles. May participate in regulating the subcellular localization of WASL, resulting in the disassembly of stress fibers in favor of filopodia formation. The protein is WAS/WASL-interacting protein family member 1 (Wipf1) of Rattus norvegicus (Rat).